The primary structure comprises 437 residues: GTPase Der (437 aa).

2 EngA-type G domains span residues 3 to 168 (PLIA…PCPE) and 178 to 353 (IKLA…LNRR). Residues 9 to 16 (GRPNVGKS), 56 to 60 (DTGGY), 120 to 123 (NKVD), 184 to 191 (GRPNVGKS), 231 to 235 (DTAGL), and 296 to 299 (NKWD) each bind GTP. Positions 354–437 (QKISTSNLNR…IPITMRFLRK (84 aa)) constitute a KH-like domain.

Belongs to the TRAFAC class TrmE-Era-EngA-EngB-Septin-like GTPase superfamily. EngA (Der) GTPase family. Associates with the 50S ribosomal subunit.

GTPase that plays an essential role in the late steps of ribosome biogenesis. The polypeptide is GTPase Der (Chlorobaculum tepidum (strain ATCC 49652 / DSM 12025 / NBRC 103806 / TLS) (Chlorobium tepidum)).